The chain runs to 457 residues: PE-PGRS family protein PE_PGRS18 (457 aa).

Residues 1-92 (MSFVNVAPQL…SSTYAVAEAA (92 aa)) enclose the PE domain. NHL repeat units lie at residues 291 to 321 (FNDPHGVAVNPGGNIYVTNQGSNTVSVIDPV), 333 to 363 (NGPSGVAVSPVTGLVFVTNFDSNTVSVIDPN), 379 to 404 (GVAVNPGGNIYVTNQFSNTVSVIDPA), and 419 to 447 (PTGVAVNPVTGVVYVTNSLDDTVSVITGE).

The protein belongs to the mycobacterial PE family. PGRS subfamily.

The protein resides in the secreted. The protein localises to the cell wall. In terms of biological role, enhances mycobacterial intracellular survival, probably via altering host macrophage cytokine profiling and attenuating the cell apoptosis. Could be required for host endothelial-cell invasion. Its function is as follows. Expression in Mycobacterium smegmatis, a nonpathogenic species naturally deficient in PE_PGRS genes, results in alteration of the production of host cytokines, including IL-6, IL-1beta, IL-10 and IL-12p40, as well as enhanced survival within macrophages largely via attenuating the apoptosis of macrophages. This Mycobacterium tuberculosis (strain ATCC 25618 / H37Rv) protein is PE-PGRS family protein PE_PGRS18.